Consider the following 86-residue polypeptide: Small ribosomal subunit protein bS20 (86 aa).

The segment covering 1 to 11 (MANIKQQKKRN) has biased composition (basic residues). The tract at residues 1-21 (MANIKQQKKRNKTNEKRRLQN) is disordered.

The protein belongs to the bacterial ribosomal protein bS20 family.

In terms of biological role, binds directly to 16S ribosomal RNA. This chain is Small ribosomal subunit protein bS20, found in Onion yellows phytoplasma (strain OY-M).